We begin with the raw amino-acid sequence, 452 residues long: Glycine receptor subunit alpha-2 (452 aa).

The N-terminal stretch at 1 to 27 (MNRQLVNILTALFAFFLGTNHFREAFC) is a signal peptide. Residues 28-256 (KDHDSRSGKH…KFHLERQMGY (229 aa)) are Extracellular-facing. Asparagine 72 carries an N-linked (GlcNAc...) asparagine glycan. Residue arginine 99 coordinates glycine. Arginine 99 serves as a coordination point for strychnine. Asparagine 103 is a glycosylation site (N-linked (GlcNAc...) asparagine). Serine 163 contacts glycine. A disulfide bridge connects residues cysteine 172 and cysteine 186. Zn(2+) is bound by residues glutamate 226 and glutamate 228. Cysteines 232 and 243 form a disulfide. Threonine 238 is a binding site for glycine. Histidine 249 lines the Zn(2+) pocket. Residues 257–278 (YLIQMYIPSLLIVILSWVSFWI) traverse the membrane as a helical segment. Over 279 to 283 (NMDAA) the chain is Cytoplasmic. Residues 284 to 304 (PARVALGITTVLTMTTQSSGS) form a helical membrane-spanning segment. The Extracellular portion of the chain corresponds to 305-315 (RASLPKVSYVK). Residues 316–336 (AIDIWMAVCLLFVFAALLEYA) form a helical membrane-spanning segment. Residues 337-420 (AVNFVSRQHK…FVDRAKRIDT (84 aa)) lie on the Cytoplasmic side of the membrane. Residues 421–441 (ISRAAFPLAFLIFNIFYWITY) traverse the membrane as a helical segment. The Extracellular portion of the chain corresponds to 442-452 (KIIRHEDVHKK).

The protein belongs to the ligand-gated ion channel (TC 1.A.9) family. Glycine receptor (TC 1.A.9.3) subfamily. GLRA2 sub-subfamily. As to quaternary structure, interacts with GLRB. Heteropentamer composed of GLRA2 and GLRB; functional GLRB-GLRA2 heteropentamers contain four GLRA2 subunits and one GLRB subunit, although alternative subunit composition cannot be excluded. Homopentamer (in vitro). Both homopentamers and heteropentamers form functional ion channels, but their characteristics are subtly different.

It localises to the postsynaptic cell membrane. Its subcellular location is the synapse. It is found in the cell membrane. The protein localises to the cell projection. The catalysed reaction is chloride(in) = chloride(out). Channel opening is triggered by extracellular glycine. Channel opening is also triggered by taurine and beta-alanine. Inhibited by strychnine. Inhibited by picrotoxin. Its function is as follows. Subunit of heteromeric glycine-gated chloride channels. Plays a role in synaptic plasticity. Contributes to the generation of inhibitory postsynaptic currents, and is involved in the down-regulation of neuronal excitability. Plays a role in cellular responses to ethanol. The sequence is that of Glycine receptor subunit alpha-2 from Rattus norvegicus (Rat).